A 445-amino-acid polypeptide reads, in one-letter code: Tubulin beta chain (445 aa).

GTP-binding residues include Gln11, Glu69, Ser138, Gly142, Thr143, Gly144, Asn204, and Asn226. Glu69 serves as a coordination point for Mg(2+).

It belongs to the tubulin family. In terms of assembly, dimer of alpha and beta chains. A typical microtubule is a hollow water-filled tube with an outer diameter of 25 nm and an inner diameter of 15 nM. Alpha-beta heterodimers associate head-to-tail to form protofilaments running lengthwise along the microtubule wall with the beta-tubulin subunit facing the microtubule plus end conferring a structural polarity. Microtubules usually have 13 protofilaments but different protofilament numbers can be found in some organisms and specialized cells. It depends on Mg(2+) as a cofactor.

It localises to the cytoplasm. The protein resides in the cytoskeleton. In terms of biological role, tubulin is the major constituent of microtubules, a cylinder consisting of laterally associated linear protofilaments composed of alpha- and beta-tubulin heterodimers. Microtubules grow by the addition of GTP-tubulin dimers to the microtubule end, where a stabilizing cap forms. Below the cap, tubulin dimers are in GDP-bound state, owing to GTPase activity of alpha-tubulin. The polypeptide is Tubulin beta chain (Coprinopsis cinerea (strain Okayama-7 / 130 / ATCC MYA-4618 / FGSC 9003) (Inky cap fungus)).